Here is a 469-residue protein sequence, read N- to C-terminus: Protopanaxadiol 6-hydroxylase (469 aa).

The helical transmembrane segment at 3-23 threads the bilayer; sequence LFISSQLLLLLVFCLFLFWNF. Cys-416 serves as a coordination point for heme.

It belongs to the cytochrome P450 family. Heme is required as a cofactor. As to expression, accumulates ubiquitously in all organs of plants, including roots, stems and leaves.

The protein resides in the membrane. The catalysed reaction is (20S)-protopanaxadiol + reduced [NADPH--hemoprotein reductase] + O2 = (20S)-protopanaxatriol + oxidized [NADPH--hemoprotein reductase] + H2O + H(+). It participates in secondary metabolite biosynthesis; terpenoid biosynthesis. Its activity is regulated as follows. Activated by N,N'-dicyclohexylcarbodiimide (DCCD) thus leading to increased ginsenosides accumulation. Its function is as follows. Component of the dammarane-type triterpene saponins (e.g. PPT-type ginsenosides or panaxosides) biosynthetic pathway. Catalyzes the formation of protopanaxatriol from protopanaxadiol during ginsenoside biosynthesis, a class of tetracyclic triterpenoid saponins. The sequence is that of Protopanaxadiol 6-hydroxylase from Panax ginseng (Korean ginseng).